We begin with the raw amino-acid sequence, 172 residues long: NADH-quinone oxidoreductase subunit B (172 aa).

[4Fe-4S] cluster is bound by residues Cys-46, Cys-47, Cys-111, and Cys-141.

It belongs to the complex I 20 kDa subunit family. As to quaternary structure, NDH-1 is composed of 14 different subunits. Subunits NuoB, C, D, E, F, and G constitute the peripheral sector of the complex. [4Fe-4S] cluster serves as cofactor.

The protein localises to the cell membrane. The enzyme catalyses a quinone + NADH + 5 H(+)(in) = a quinol + NAD(+) + 4 H(+)(out). Its function is as follows. NDH-1 shuttles electrons from NADH, via FMN and iron-sulfur (Fe-S) centers, to quinones in the respiratory chain. The immediate electron acceptor for the enzyme in this species is believed to be a menaquinone. Couples the redox reaction to proton translocation (for every two electrons transferred, four hydrogen ions are translocated across the cytoplasmic membrane), and thus conserves the redox energy in a proton gradient. The protein is NADH-quinone oxidoreductase subunit B of Bacillus anthracis (strain A0248).